A 212-amino-acid chain; its full sequence is Small ribosomal subunit protein uS3 (212 aa).

A KH type-2 domain is found at 38–106 (IRKFVKKTLY…EFAIEVNEIR (69 aa)).

This sequence belongs to the universal ribosomal protein uS3 family. As to quaternary structure, part of the 30S ribosomal subunit. Forms a tight complex with proteins S10 and S14.

Functionally, binds the lower part of the 30S subunit head. Binds mRNA in the 70S ribosome, positioning it for translation. The polypeptide is Small ribosomal subunit protein uS3 (Nitratidesulfovibrio vulgaris (strain ATCC 29579 / DSM 644 / CCUG 34227 / NCIMB 8303 / VKM B-1760 / Hildenborough) (Desulfovibrio vulgaris)).